A 969-amino-acid polypeptide reads, in one-letter code: MAADSDPESEVFEITDFTTASEWERFISRVEEVLNDWKLIGSRVGKPLEKGEYTSGTWEESSQEISFADFKFSITHHYLKQESAENDGRDELEEDAYPLAMQDLLCINNDFPPRAHCLVRWFGVREFVVISPGANCEAIISESKCSLLLSSVSIALANTGCQVPLFVQIQQKHRKMFSGECQGPGVRSDFEMVHLRRVPSQYNHLSGLLDIFKNKIGCPLTPLPPINISIRFTYVLQDWQQCSWPQQPPDFDALLAGEVGGVEFGKLPFGACEDPISELHLAATWPSLTEGIVVDNDVYSDLDPLQAPHWSVRVRTAENPQCLLGEFLTEFFKICCRKETTEEILGRSTAEEEGKENSDITQALSKLTEPSTAVPIHKLSVSSMVHSARKRIRRHRRVPESPLNNDVLNSILLYLFPDAALDKADVSEVRPPQQSPDRQSEDYHLYNQLKSCPSDSLTHRLALCICMVNFHHGGVRAVAHLWQEFVLEMRYRWENNCLIYGLASGPPDLRCCLLHQKLQMLNCCIERKKARDDGKKSSSSDGARDRSRGAPEGAGPEGAGPAEAAGKSWDSWSDSEDEFFECVSDTEEMKEDKEEAENRSRSKPEGRLQPHGTHTLLNTQEPLYIPITQEPAPMTEDLLEEQSEVLAKLGTSAEGAHLRARMQSACLLSDMESFKAANPGCTLLDFVRWYSPRDYVEEQVTDADGRVEVRGELSARMKIPGNMWVEAWETARATPARRQKRLFDDTKEAEKVLHYLALQKPSELTRHLLPCVLHAALLKIKEEESAEDLPSVRSSLQQISSSASKILRHPNPEFKKLEDVISQLMAVEAVIARARSLKAKFGVCGGEREREEDGDELERFVSSLLEEPEVCVSGAGRGPAGNVIHKLFVSSQRAALLAPMEEETLRSGGSDDRKAFPDFPPPAGREILLRTCVPRPAPYSKALPQRLFCVLMRDEFRLAGAFSSDTSFF.

Over residues 532–549 the composition is skewed to basic and acidic residues; it reads DDGKKSSSSDGARDRSRG. Residues 532–613 are disordered; sequence DDGKKSSSSD…PEGRLQPHGT (82 aa). Low complexity predominate over residues 550–572; sequence APEGAGPEGAGPAEAAGKSWDSW. Positions 573-589 are enriched in acidic residues; it reads SDSEDEFFECVSDTEEM. The span at 590 to 608 shows a compositional bias: basic and acidic residues; it reads KEDKEEAENRSRSKPEGRL.

This sequence belongs to the Rab3-GAP catalytic subunit family. In terms of assembly, the Rab3 GTPase-activating complex is a heterodimer composed of rab3gap1 and rab3gap2. The Rab3 GTPase-activating complex interacts with DMXL2. Interacts with LMAN1.

The protein resides in the cytoplasm. It localises to the endoplasmic reticulum. The protein localises to the golgi apparatus. It is found in the cis-Golgi network. Functionally, catalytic subunit of the Rab3 GTPase-activating (Rab3GAP) complex composed of rab3gap1 and rab3gap2, which has GTPase-activating protein (GAP) activity towards various Rab3 subfamily members (RAB3A, RAB3B, RAB3C and RAB3D), RAB5A and RAB43, and guanine nucleotide exchange factor (GEF) activity towards RAB18. As part of the Rab3GAP complex, acts as a GAP for Rab3 proteins by converting active RAB3-GTP to the inactive form RAB3-GDP. Rab3 proteins are involved in regulated exocytosis of neurotransmitters and hormones. The Rab3GAP complex, acts as a GEF for RAB18 by promoting the conversion of inactive RAB18-GDP to the active form RAB18-GTP. Recruits and stabilizes RAB18 at the cis-Golgi membrane where RAB18 is most likely activated. Also involved in RAB18 recruitment at the endoplasmic reticulum (ER) membrane where it maintains proper ER structure. Required for normal eye and brain development. May participate in neurodevelopmental processes such as proliferation, migration and differentiation before synapse formation, and non-synaptic vesicular release of neurotransmitters. The chain is Rab3 GTPase-activating protein catalytic subunit (rab3gap1) from Danio rerio (Zebrafish).